The chain runs to 283 residues: Bifunctional protein FolD (283 aa).

NADP(+)-binding positions include 165–167 and Ser-190; that span reads GRS.

It belongs to the tetrahydrofolate dehydrogenase/cyclohydrolase family. In terms of assembly, homodimer.

The enzyme catalyses (6R)-5,10-methylene-5,6,7,8-tetrahydrofolate + NADP(+) = (6R)-5,10-methenyltetrahydrofolate + NADPH. It carries out the reaction (6R)-5,10-methenyltetrahydrofolate + H2O = (6R)-10-formyltetrahydrofolate + H(+). Its pathway is one-carbon metabolism; tetrahydrofolate interconversion. Catalyzes the oxidation of 5,10-methylenetetrahydrofolate to 5,10-methenyltetrahydrofolate and then the hydrolysis of 5,10-methenyltetrahydrofolate to 10-formyltetrahydrofolate. The polypeptide is Bifunctional protein FolD (Methylibium petroleiphilum (strain ATCC BAA-1232 / LMG 22953 / PM1)).